Consider the following 816-residue polypeptide: Coiled-coil and C2 domain-containing protein 1-like (816 aa).

Over residues 1 to 11 (MFSRKKPEPAK) the composition is skewed to basic and acidic residues. 3 disordered regions span residues 1–135 (MFSR…TFLP), 157–176 (ANAK…RGLK), and 186–269 (AAGK…RQTD). Residues 25–47 (IPDDFDPSAGYGEDDGGDSDLEA) are compositionally biased toward acidic residues. Over residues 73–85 (DLDKMIADSLRDV) the composition is skewed to basic and acidic residues. Positions 86 to 100 (SDDDDDDNLESDPDL) are enriched in acidic residues. Residues 122 to 131 (PPAASEEPVQ) show a composition bias toward low complexity. Residues 145–200 (IKQRLEMYKQAEANAKTAGDSGKARRFGRGLKTLKDLHRQAAAGKSINVDDIPPEV) are DM14 1. Positions 220 to 243 (PSTPASPPPVPSRAAPDPPTPGTP) are enriched in pro residues. DM14 stretches follow at residues 265–317 (SRQT…MPPP) and 365–419 (LQQR…LPVP). Residues 355 to 382 (LAAATNMLEALQQRLEKYQSVEAAAKAE) adopt a coiled-coil conformation. The interval 418–492 (VPPGFGPLPT…TRTSGNQQKN (75 aa)) is disordered. Positions 424–433 (PLPTADAAPV) are enriched in low complexity. A compositionally biased stretch (pro residues) spans 434-449 (APTPSLPTSPTSPPPT). A compositionally biased stretch (low complexity) spans 450–471 (ASTSAGGTPSSSSATTPTAPRK). Residues 483–492 (TRTSGNQQKN) show a composition bias toward polar residues. A DM14 4 region spans residues 502–556 (LLERQKEFKLAAIEAKKAGEIDQAKEYLKIFKGFDSLLNAASSGLPVDLSTLPVP). A C2 domain is found at 637–776 (RKNEPLPKFH…ETKCEIHDTY (140 aa)).

This sequence belongs to the CC2D1 family. As to quaternary structure, interacts (via DM14 domains 1 and 3) with shrb; the interaction is direct and blocks access to the surface involved in shrb polymerization. This interaction may be required for the ESCRT-III complex role in multivesicular body formation.

The protein localises to the cytoplasm. Its subcellular location is the cytosol. The protein resides in the apicolateral cell membrane. It is found in the cell cortex. It localises to the endosome. Its function is as follows. Phosphatidyl inositol monophosphate binding protein involved in endosomal protein sorting through regulation of the endosomal sorting required for transport (ESCRT) pathway. Required for full activity of the ESCRT-III complex core component shrb/shrub, probably by preventing its inappropriate polymerisation. Required, but not essential, for the efficient generation of intraluminal vesicles (ILVs) in multivesicular bodies (MVBs). Involved in a late stage of the endosomal pathway targeting transmembrane proteins of the plasma membrane for lysosomal degradation. Plays a critical role in regulation of multiple signal transduction pathways, including the Notch and BMP/decapentaplegic (dpp) signaling pathways, through targeting of membrane bound receptors to multivesicular bodies, isolating them from the cytoplasm and targeting them for lysosomal degradation. Involved in targeting N/Notch for endosomal degradation, negatively regulating the Notch signaling pathway. Regulates Notch signaling in imaginal disk cells and follicle cells during oogenesis and multiple developmental processes, including development of wings, veins, legs, eyes and bristles. Restricts the activity of Notch to the dorsoventral (D/V) boundary of the wing imaginal disk. In external sensory organ development regulates Notch signaling during asymmetric cell division and differentiation of sensory organ precursor cells. May be involved in regulation of apoptosis and cell growth independent of Notch signaling. Involved in targeting tkv for endosomal degradation, negatively regulating the BMP/decapentaplegic (dpp) signaling pathway. Regulates the BMP/dpp signaling pathway in follicle cells during oogenesis, but not in imaginal disk cells during wing development. May be involved in differentiation or morphogenesis of peripodial epithelial cells in the developing imaginal disk. Involved in abscission of germline cells during oogenesis. The protein is Coiled-coil and C2 domain-containing protein 1-like of Drosophila melanogaster (Fruit fly).